The sequence spans 129 residues: Cytochrome c oxidase subunit 5B, mitochondrial (129 aa).

The N-terminal 31 residues, 1–31, are a transit peptide targeting the mitochondrion; it reads MASRLLRGVGALAAQALRAHGPRGVAATRSM. Residues Lys68 and Lys86 each carry the N6-acetyllysine modification. Residues Cys91, Cys93, Cys113, and Cys116 each contribute to the Zn(2+) site. Residue Lys121 is modified to N6-acetyllysine.

The protein belongs to the cytochrome c oxidase subunit 5B family. As to quaternary structure, component of the cytochrome c oxidase (complex IV, CIV), a multisubunit enzyme composed of 14 subunits. The complex is composed of a catalytic core of 3 subunits MT-CO1, MT-CO2 and MT-CO3, encoded in the mitochondrial DNA, and 11 supernumerary subunits COX4I, COX5A, COX5B, COX6A, COX6B, COX6C, COX7A, COX7B, COX7C, COX8 and NDUFA4, which are encoded in the nuclear genome. The complex exists as a monomer or a dimer and forms supercomplexes (SCs) in the inner mitochondrial membrane with NADH-ubiquinone oxidoreductase (complex I, CI) and ubiquinol-cytochrome c oxidoreductase (cytochrome b-c1 complex, complex III, CIII), resulting in different assemblies (supercomplex SCI(1)III(2)IV(1) and megacomplex MCI(2)III(2)IV(2)).

It localises to the mitochondrion inner membrane. It functions in the pathway energy metabolism; oxidative phosphorylation. Its function is as follows. Component of the cytochrome c oxidase, the last enzyme in the mitochondrial electron transport chain which drives oxidative phosphorylation. The respiratory chain contains 3 multisubunit complexes succinate dehydrogenase (complex II, CII), ubiquinol-cytochrome c oxidoreductase (cytochrome b-c1 complex, complex III, CIII) and cytochrome c oxidase (complex IV, CIV), that cooperate to transfer electrons derived from NADH and succinate to molecular oxygen, creating an electrochemical gradient over the inner membrane that drives transmembrane transport and the ATP synthase. Cytochrome c oxidase is the component of the respiratory chain that catalyzes the reduction of oxygen to water. Electrons originating from reduced cytochrome c in the intermembrane space (IMS) are transferred via the dinuclear copper A center (CU(A)) of subunit 2 and heme A of subunit 1 to the active site in subunit 1, a binuclear center (BNC) formed by heme A3 and copper B (CU(B)). The BNC reduces molecular oxygen to 2 water molecules using 4 electrons from cytochrome c in the IMS and 4 protons from the mitochondrial matrix. The chain is Cytochrome c oxidase subunit 5B, mitochondrial (Cox5b) from Rattus norvegicus (Rat).